Here is an 86-residue protein sequence, read N- to C-terminus: Putative regulatory protein Dvul_2085 (86 aa).

Belongs to the RemA family.

The sequence is that of Putative regulatory protein Dvul_2085 from Nitratidesulfovibrio vulgaris (strain DP4) (Desulfovibrio vulgaris).